The sequence spans 33 residues: Photosystem II reaction center protein Psb30 (33 aa).

A helical transmembrane segment spans residues 8–28; sequence QLGSLLLITVAGPLIVFFLFI.

It belongs to the Psb30/Ycf12 family. As to quaternary structure, PSII is composed of 1 copy each of membrane proteins PsbA, PsbB, PsbC, PsbD, PsbE, PsbF, PsbH, PsbI, PsbJ, PsbK, PsbL, PsbM, PsbT, PsbY, PsbZ, Psb30/Ycf12, peripheral proteins of the oxygen-evolving complex and a large number of cofactors. It forms dimeric complexes.

Its subcellular location is the plastid. The protein resides in the chloroplast thylakoid membrane. A core subunit of photosystem II (PSII), probably helps stabilize the reaction center. The chain is Photosystem II reaction center protein Psb30 from Euglena anabaena (Euglenaria anabaena).